A 1014-amino-acid chain; its full sequence is Probable transport protein MmpL11 (1014 aa).

The next 12 membrane-spanning stretches (helical) occupy residues 13–33 (WLVFTGWLLALVPAIYLAMTQ), 156–173 (VRLYVIGQGALSAAVAAN), 188–208 (IILIVLLAVFGSLAAAAVPLA), 235–255 (TSTVSMFGIALAVDYSLFILM), 279–299 (GLAVVLSGMTVIASLTGIYLI), 311–331 (AILAVAIAMLASITLTPAALA), 373–393 (ASAASTILIIMATPVTSMMLG), 530–550 (TEPLMLVFVALIAFVMLLISI), 560–580 (VLMTLLSVAAAYGSLVMVFQW), 598–618 (VPPLVLAMTFGLSMDYEIFLL), 649–669 (AALIMIAVFVGFAFAGMPLVA), and 671–691 (IGVACAVAIAVDVTAVRLVLV). Residues 783 to 802 (SDRVLPGAATQESEEDPAMG) form a disordered region.

The protein belongs to the resistance-nodulation-cell division (RND) (TC 2.A.6) family. MmpL subfamily.

Its subcellular location is the cell membrane. This chain is Probable transport protein MmpL11 (mmpL11), found in Mycobacterium leprae (strain TN).